The chain runs to 349 residues: Large ribosomal subunit protein uL2mz, N-terminal part (349 aa).

It belongs to the universal ribosomal protein uL2 family. In terms of assembly, component of the mitochondrial ribosome large subunit.

The protein localises to the mitochondrion. This Arabidopsis thaliana (Mouse-ear cress) protein is Large ribosomal subunit protein uL2mz, N-terminal part.